Consider the following 143-residue polypeptide: Cytochrome c-type biogenesis protein CcmE (143 aa).

Over 1 to 8 the chain is Cytoplasmic; sequence MTPVRRRK. Residues 9–29 traverse the membrane as a helical; Signal-anchor for type II membrane protein segment; it reads LFILLFALSVLSAAAALVLYA. At 30–143 the chain is on the periplasmic side; it reads LRQNISLFYT…KSALADKVKQ (114 aa). H124 and Y128 together coordinate heme.

It belongs to the CcmE/CycJ family.

It localises to the cell inner membrane. Functionally, heme chaperone required for the biogenesis of c-type cytochromes. Transiently binds heme delivered by CcmC and transfers the heme to apo-cytochromes in a process facilitated by CcmF and CcmH. This chain is Cytochrome c-type biogenesis protein CcmE, found in Legionella pneumophila.